The following is a 1167-amino-acid chain: Rhoptry neck protein 2-like protein 2 (1167 aa).

The N-terminal stretch at methionine 1–glycine 20 is a signal peptide. Over lysine 21–lysine 977 the chain is Cytoplasmic. The segment at glycine 55 to alanine 94 is disordered. A compositionally biased stretch (basic and acidic residues) spans methionine 68–arginine 77. Residues leucine 978–leucine 998 traverse the membrane as a helical segment. At aspartate 999–arginine 1167 the chain is on the extracellular side. Cysteines 1015 and 1026 form a disulfide.

Belongs to the apicomplexan parasites RON2 family.

It localises to the secreted. It is found in the host cell membrane. Its function is as follows. May play a role in host cell invasion. The polypeptide is Rhoptry neck protein 2-like protein 2 (RON2L2) (Toxoplasma gondii (strain ATCC 50611 / Me49)).